Here is a 1452-residue protein sequence, read N- to C-terminus: Protein clueless (1452 aa).

Disordered stretches follow at residues 1–93 (MALE…SNGH) and 266–288 (KKTR…VSEP). Low complexity predominate over residues 8 to 24 (KNSNATATSDATATKAS). Residues 42 to 59 (PIPNSNHQNSNQNLVNGN) show a composition bias toward polar residues. The span at 68 to 77 (AKKKGKKNRN) shows a compositional bias: basic residues. Serine 272 is modified (phosphoserine). One can recognise a Clu domain in the interval 426–668 (RAEDAFSSKL…RTFPPDVNFL (243 aa)). Disordered regions lie at residues 726–775 (KQSE…GDTK), 962–1013 (AVSS…SSVS), and 1414–1452 (ANNN…ATSS). Over residues 750–766 (GADKTDVKEEKNEENEK) the composition is skewed to basic and acidic residues. Residues 970 to 985 (KKRGNGGKHNKHKSSK) show a composition bias toward basic residues. A compositionally biased stretch (low complexity) spans 990–1013 (QQQQQATGNQNGSSSGSSNGSSVS). The segment covering 1423–1433 (AVPKDVEEQKE) has biased composition (basic and acidic residues).

It belongs to the CLU family.

The protein resides in the cytoplasm. MRNA-binding protein involved in proper cytoplasmic distribution of mitochondria. The sequence is that of Protein clueless from Drosophila erecta (Fruit fly).